A 435-amino-acid chain; its full sequence is AMSH-like protease sst2 (435 aa).

Over residues 162 to 181 (TDLLSPDSQKLSKSSSDLPQ) the composition is skewed to low complexity. Residues 162-185 (TDLLSPDSQKLSKSSSDLPQFDYP) are disordered. Thr192 is subject to Phosphothreonine. The MPN domain occupies 262-392 (TIYLPKLLKK…FRLLDPEGLQ (131 aa)). Zn(2+) contacts are provided by His341, His343, Asp354, His356, Cys397, His404, and His406. A JAMM motif motif is present at residues 341 to 354 (HTHPTQTCFMSSVD).

It belongs to the peptidase M67C family. Requires Zn(2+) as cofactor.

Its subcellular location is the cytoplasm. It is found in the endosome. Zinc metalloprotease that specifically cleaves 'Lys-63'-linked polyubiquitin chains. Does not cleave 'Lys-48'-linked polyubiquitin chains. Plays a role in the multivesicular body (MVB) sorting pathway. Required for ubiquitin-dependent sorting of proteins into the endosome and subsequent trafficking to the vacuole. May regulate MVB sorting through deubiquitination of ubiquitinated ESCRT proteins. In Schizosaccharomyces pombe (strain 972 / ATCC 24843) (Fission yeast), this protein is AMSH-like protease sst2 (sst2).